The sequence spans 435 residues: Histone acetyltransferase type B subunit 2 (435 aa).

WD repeat units follow at residues 135–175 (NHAG…SKAP), 188–228 (GQTK…KQDP), 238–278 (GHSA…TAKA), 284–324 (GHNA…TKHH), and 328–368 (AHTN…AEQT). An interaction with the histone H4 N-terminus region spans residues 370–374 (DDAED). One copy of the WD 6 repeat lies at 385–425 (GHTSKVCDISWSPSSPWTIASASEDNILQVWEPSRHLRTPY).

The protein belongs to the WD repeat RBAP46/RBAP48/MSI1 family. Component of the HAT-B complex composed of at least HAT1 and HAT2. The HAT-B complex binds to histone H4 tail.

The protein localises to the cytoplasm. Its subcellular location is the nucleus. Regulatory subunit of the histone acetylase B (HAT-B) complex. The complex acetylates 'Lys-12' of histone H4 which is required for telomeric silencing. The protein is Histone acetyltransferase type B subunit 2 (HAT2) of Cryptococcus neoformans var. neoformans serotype D (strain B-3501A) (Filobasidiella neoformans).